A 460-amino-acid polypeptide reads, in one-letter code: UDP-N-acetylmuramoylalanine--D-glutamate ligase (460 aa).

120-126 provides a ligand contact to ATP; it reads GSNGKTT.

It belongs to the MurCDEF family.

It is found in the cytoplasm. It catalyses the reaction UDP-N-acetyl-alpha-D-muramoyl-L-alanine + D-glutamate + ATP = UDP-N-acetyl-alpha-D-muramoyl-L-alanyl-D-glutamate + ADP + phosphate + H(+). The protein operates within cell wall biogenesis; peptidoglycan biosynthesis. In terms of biological role, cell wall formation. Catalyzes the addition of glutamate to the nucleotide precursor UDP-N-acetylmuramoyl-L-alanine (UMA). The polypeptide is UDP-N-acetylmuramoylalanine--D-glutamate ligase (Lactobacillus gasseri (strain ATCC 33323 / DSM 20243 / BCRC 14619 / CIP 102991 / JCM 1131 / KCTC 3163 / NCIMB 11718 / NCTC 13722 / AM63)).